Reading from the N-terminus, the 71-residue chain is Large ribosomal subunit protein bL31 (71 aa).

Zn(2+) is bound by residues C16, C18, C37, and C40.

Belongs to the bacterial ribosomal protein bL31 family. Type A subfamily. In terms of assembly, part of the 50S ribosomal subunit. Zn(2+) is required as a cofactor.

Binds the 23S rRNA. The sequence is that of Large ribosomal subunit protein bL31 from Wigglesworthia glossinidia brevipalpis.